The primary structure comprises 118 residues: UPF0102 protein NE0711 (118 aa).

The protein belongs to the UPF0102 family.

The polypeptide is UPF0102 protein NE0711 (Nitrosomonas europaea (strain ATCC 19718 / CIP 103999 / KCTC 2705 / NBRC 14298)).